A 228-amino-acid chain; its full sequence is Ribose-5-phosphate isomerase A (228 aa).

Substrate-binding positions include 27–30 (TGTT), 86–89 (DGAD), and 100–103 (KGGG). Catalysis depends on glutamate 109, which acts as the Proton acceptor. Position 127 (lysine 127) interacts with substrate.

This sequence belongs to the ribose 5-phosphate isomerase family. As to quaternary structure, homodimer.

The enzyme catalyses aldehydo-D-ribose 5-phosphate = D-ribulose 5-phosphate. Its pathway is carbohydrate degradation; pentose phosphate pathway; D-ribose 5-phosphate from D-ribulose 5-phosphate (non-oxidative stage): step 1/1. Catalyzes the reversible conversion of ribose-5-phosphate to ribulose 5-phosphate. The polypeptide is Ribose-5-phosphate isomerase A (Borrelia hermsii (strain HS1 / DAH)).